Consider the following 156-residue polypeptide: ATP synthase subunit b (156 aa).

Residues 5 to 25 traverse the membrane as a helical segment; sequence LTLIVQMLVFAAFVLFTMKLV.

Belongs to the ATPase B chain family. As to quaternary structure, F-type ATPases have 2 components, F(1) - the catalytic core - and F(0) - the membrane proton channel. F(1) has five subunits: alpha(3), beta(3), gamma(1), delta(1), epsilon(1). F(0) has three main subunits: a(1), b(2) and c(10-14). The alpha and beta chains form an alternating ring which encloses part of the gamma chain. F(1) is attached to F(0) by a central stalk formed by the gamma and epsilon chains, while a peripheral stalk is formed by the delta and b chains.

The protein localises to the cell inner membrane. In terms of biological role, f(1)F(0) ATP synthase produces ATP from ADP in the presence of a proton or sodium gradient. F-type ATPases consist of two structural domains, F(1) containing the extramembraneous catalytic core and F(0) containing the membrane proton channel, linked together by a central stalk and a peripheral stalk. During catalysis, ATP synthesis in the catalytic domain of F(1) is coupled via a rotary mechanism of the central stalk subunits to proton translocation. Component of the F(0) channel, it forms part of the peripheral stalk, linking F(1) to F(0). The sequence is that of ATP synthase subunit b from Legionella pneumophila (strain Paris).